Consider the following 578-residue polypeptide: Putative transporter B0361.11 (578 aa).

A disordered region spans residues 1 to 30 (MSISRRSYEQFDEMKSENQENNSKKKSSER). 11 helical membrane passes run 51–71 (IFTYVLVQTLNFFYSSSMYIM), 148–168 (FGLTIFTIGAVIAVPFMSMLA), 182–202 (ILAFLANMAASFSPNFAIFLI), 232–252 (AWITVVYNVAWSLGMVWTLLV), 263–283 (YFIVSLPGVYGFALWYFLPES), 339–359 (IWLLFANGFIEMVISLVYFAI), 373–393 (AFLYSSLIEIPAGLAVIPLMM), 399–419 (MIVIWCLVFQTLALIGVTVFL), 426–446 (LVIMLVAKVMATIIYSVHPIW), 457–477 (SLCFSLMNIPQSMGIIMSPYV), and 486–506 (WIPFVVIALFSFISATLAFML). A compositionally biased stretch (low complexity) spans 532–550 (AYRRSKSSSSSVSALSKTS). A disordered region spans residues 532–561 (AYRRSKSSSSSVSALSKTSVRSKKTLSSES).

It belongs to the major facilitator superfamily. Sugar transporter (TC 2.A.1.1) family.

It localises to the membrane. The polypeptide is Putative transporter B0361.11 (Caenorhabditis elegans).